A 513-amino-acid chain; its full sequence is ATP synthase subunit alpha (513 aa).

169–176 is an ATP binding site; sequence GDRQCGKT.

It belongs to the ATPase alpha/beta chains family. In terms of assembly, F-type ATPases have 2 components, CF(1) - the catalytic core - and CF(0) - the membrane proton channel. CF(1) has five subunits: alpha(3), beta(3), gamma(1), delta(1), epsilon(1). CF(0) has three main subunits: a(1), b(2) and c(9-12). The alpha and beta chains form an alternating ring which encloses part of the gamma chain. CF(1) is attached to CF(0) by a central stalk formed by the gamma and epsilon chains, while a peripheral stalk is formed by the delta and b chains.

Its subcellular location is the cell inner membrane. The catalysed reaction is ATP + H2O + 4 H(+)(in) = ADP + phosphate + 5 H(+)(out). In terms of biological role, produces ATP from ADP in the presence of a proton gradient across the membrane. The alpha chain is a regulatory subunit. This chain is ATP synthase subunit alpha, found in Burkholderia orbicola (strain AU 1054).